We begin with the raw amino-acid sequence, 172 residues long: Centrin-1 (172 aa).

The interval Met-1–Lys-30 is disordered. 4 consecutive EF-hand domains span residues Glu-28 to Glu-63, Pro-64 to Glu-99, Asp-101 to Asn-136, and Leu-137 to Tyr-172. Positions 41, 43, 45, 47, and 52 each coordinate Ca(2+). Residues Asp-150, Asp-152, Asp-154, Glu-156, and Glu-161 each contribute to the Ca(2+) site.

The protein belongs to the centrin family. Monomer. Interacts with CIMAP3. Interacts with USP49.

It is found in the cytoplasm. It localises to the cytoskeleton. The protein resides in the microtubule organizing center. Its subcellular location is the centrosome. In terms of biological role, plays a fundamental role in microtubule-organizing center structure and function. Plays a role in sperm cilia formation. The chain is Centrin-1 (CETN1) from Bos taurus (Bovine).